Reading from the N-terminus, the 124-residue chain is Small ribosomal subunit protein uS13 (124 aa).

The segment at 87-124 (GSYRGNRHRKRLPVRGQRTKTNSRTRKGKRRTVGSKTK) is disordered. Residues 91–124 (GNRHRKRLPVRGQRTKTNSRTRKGKRRTVGSKTK) are compositionally biased toward basic residues.

It belongs to the universal ribosomal protein uS13 family. As to quaternary structure, part of the 30S ribosomal subunit. Forms a loose heterodimer with protein S19. Forms two bridges to the 50S subunit in the 70S ribosome.

Functionally, located at the top of the head of the 30S subunit, it contacts several helices of the 16S rRNA. In the 70S ribosome it contacts the 23S rRNA (bridge B1a) and protein L5 of the 50S subunit (bridge B1b), connecting the 2 subunits; these bridges are implicated in subunit movement. Contacts the tRNAs in the A and P-sites. This is Small ribosomal subunit protein uS13 from Elusimicrobium minutum (strain Pei191).